A 233-amino-acid polypeptide reads, in one-letter code: Triosephosphate isomerase (233 aa).

8-10 (NWK) contacts substrate. His91 acts as the Electrophile in catalysis. Glu155 functions as the Proton acceptor in the catalytic mechanism. Gly161 and Ser192 together coordinate substrate.

It belongs to the triosephosphate isomerase family. Homodimer.

The protein localises to the cytoplasm. The catalysed reaction is D-glyceraldehyde 3-phosphate = dihydroxyacetone phosphate. It participates in carbohydrate biosynthesis; gluconeogenesis. It functions in the pathway carbohydrate degradation; glycolysis; D-glyceraldehyde 3-phosphate from glycerone phosphate: step 1/1. Involved in the gluconeogenesis. Catalyzes stereospecifically the conversion of dihydroxyacetone phosphate (DHAP) to D-glyceraldehyde-3-phosphate (G3P). In Wolbachia sp. subsp. Brugia malayi (strain TRS), this protein is Triosephosphate isomerase.